We begin with the raw amino-acid sequence, 77 residues long: Translation initiation factor IF-1, chloroplastic (77 aa).

Residues 1–72 (MKKQNLIEME…TKGRITYRLR (72 aa)) form the S1-like domain.

This sequence belongs to the IF-1 family. In terms of assembly, component of the 30S ribosomal translation pre-initiation complex which assembles on the 30S ribosome in the order IF-2 and IF-3, IF-1 and N-formylmethionyl-tRNA(fMet); mRNA recruitment can occur at any time during PIC assembly.

It localises to the plastid. It is found in the chloroplast. One of the essential components for the initiation of protein synthesis. Stabilizes the binding of IF-2 and IF-3 on the 30S subunit to which N-formylmethionyl-tRNA(fMet) subsequently binds. Helps modulate mRNA selection, yielding the 30S pre-initiation complex (PIC). Upon addition of the 50S ribosomal subunit IF-1, IF-2 and IF-3 are released leaving the mature 70S translation initiation complex. The chain is Translation initiation factor IF-1, chloroplastic from Zygnema circumcarinatum (Green alga).